The following is a 490-amino-acid chain: Probable alcohol acetyltransferase FCK4 (490 aa).

It belongs to the alcohol acetyltransferase FCK4 family.

It functions in the pathway secondary metabolite biosynthesis. In terms of biological role, probable alcohol acetyltransferase; part of the gene cluster that mediates the biosynthesis of cytokinins such as fusatin, fusatinic acids or 8-oxofusatin, known for their growth promoting and anti-senescence activities toward host plants. FCK1 is a bifunctional enzyme that performs the first steps in the biosynthesis of Fusarium cytokinins. It first condenses adenosine monophosphate (AMP) with dimethylallyl diphosphate (DMAPP) to yield isoprenyl adenosine monophosphate. It then catalyzes the removal of the phosphoribose to produce isopentenylaldehyde. The cytochrome P450 monooxygenase then converts isopentenylaldehyde to trans-zeatin. A condensation step converts trans-zeatin to fusatin which is further modified to produce fusatinic acid. The mechanism for oxidation of fusatin to fusatinic acid remains unknown. 8-oxofusatin could be produced through several pathways, via direct oxygenation of fusatin, or via the 8-oxo-pentenyladenine intermediate which itself must arise from either the prenylation of 8-oxo-AMP by FCK1 and/or oxygenation of isopentenylaldehyde. Both the FCK3 and FCK4 enzymes act downstream of the identified cytokinins to produce yet unidentified compounds. This chain is Probable alcohol acetyltransferase FCK4, found in Fusarium pseudograminearum (strain CS3096) (Wheat and barley crown-rot fungus).